The primary structure comprises 174 residues: Fimbria A protein (174 aa).

An N-terminal signal peptide occupies residues 1–22 (MKLNKIMLATVLAFGVSSLANA). Cys41 and Cys80 are oxidised to a cystine.

It belongs to the fimbrial protein family.

The protein localises to the fimbrium. Its function is as follows. Major structural component of mannose-resistant fimbriae of Serratia marcescens. This is Fimbria A protein (smfA) from Serratia marcescens.